A 410-amino-acid polypeptide reads, in one-letter code: Elongation factor Tu, apicoplast (410 aa).

Residues 10 to 214 (KQHINLGTIG…QIIDNIIIPT (205 aa)) form the tr-type G domain. The segment at 19 to 26 (GHVDHGKT) is G1. 19 to 26 (GHVDHGKT) is a GTP binding site. Position 26 (T26) interacts with Mg(2+). Residues 60-64 (GITIN) are G2. A G3 region spans residues 81–84 (DCPG). Residues 81 to 85 (DCPGH) and 136 to 139 (NKED) each bind GTP. The segment at 136 to 139 (NKED) is G4. The G5 stretch occupies residues 174-176 (SAL).

This sequence belongs to the TRAFAC class translation factor GTPase superfamily. Classic translation factor GTPase family. EF-Tu/EF-1A subfamily.

The protein resides in the plastid. The protein localises to the apicoplast. The enzyme catalyses GTP + H2O = GDP + phosphate + H(+). Functionally, GTP hydrolase that promotes the GTP-dependent binding of aminoacyl-tRNA to the A-site of ribosomes during protein biosynthesis. In Plasmodium falciparum (isolate 3D7), this protein is Elongation factor Tu, apicoplast (tufA).